A 563-amino-acid polypeptide reads, in one-letter code: Cytochrome P450 monooxygenase efuG (563 aa).

The chain crosses the membrane as a helical span at residues 10–30 (ITSHQWGIGSVFLLISIPLIV). The tract at residues 462-482 (PDDPQSGPRKDAKKQKAKSDG) is disordered. Position 505 (C505) interacts with heme.

Belongs to the cytochrome P450 family. The cofactor is heme.

The protein resides in the membrane. It functions in the pathway secondary metabolite biosynthesis; terpenoid biosynthesis. Cytochrome P450 monooxygenase; part of the gene cluster that mediates the biosynthesis of enfumafungin, a glycosylated fernene-type triterpenoid with potent antifungal activity, mediated by its interaction with beta-1,3-glucan synthase and the fungal cell wall. The pathway begins with the terpene cyclase-glycosyl transferase fusion protein that most likely uses 2,3-oxidosqualene as substrate and catalyzes glycosylation immediately after cyclization. The fernene glycoside then could be processed by the desaturase efuI which catalyzes isomerization of a double bond established by efuA to form the core structure. The latter would then undergo a series of hydroxylations in unknown order at C-2, C-19, C-23 and C-25, which would be catalyzed by two of the three cytochrome P450 monooxygenases efuB, efuG or efuH. The hydroxy-group at C-25 becomes oxidized by the dehydrogenase efuE to enable a spontaneous, non-enzymatic hemiacetal formation with C-23. After hydroxylation at C-2, acetylation by the acetyltransferase efuC takes place. The final steps in enfumafungin biosynthesis require expansion of the 5-membered ring by lactonization via a Baeyer-Villiger reaction mediated by one of the BGC's cytochrome P450 monooxygenases (efuB, efuG or efuH) followed by ring cleavage. This type of reaction would establish a double bond between C-20 and C-21 which could be reduced by the reductase efuL to form the final product. This is Cytochrome P450 monooxygenase efuG from Hormonema carpetanum.